The following is a 110-amino-acid chain: Small ribosomal subunit protein bS16 (110 aa).

The tract at residues Lys-84–Lys-110 is disordered.

Belongs to the bacterial ribosomal protein bS16 family.

This chain is Small ribosomal subunit protein bS16, found in Rhodopseudomonas palustris (strain BisB18).